Here is a 192-residue protein sequence, read N- to C-terminus: Visinin (192 aa).

G2 carries the N-myristoyl glycine lipid modification. 4 EF-hand domains span residues 24-59 (TEEELSRWYEGFQRQCPDGRIRCDEFERIYGNFFPN), 61-96 (EPQGYARHVFRSFDTNDDGTLDFREYIIALHLTSSG), 97-132 (KTHLKLEWAFSLFDVDRNGEVSKSEVLEIITAIFKM), and 146-181 (NSPQKRADKLWAYFNKGENDKIAEGEFIDGVMKNDA). 13 residues coordinate Ca(2+): D74, N76, D78, T80, E85, D110, D112, N114, E116, E121, N164, K166, and E171.

It belongs to the recoverin family. Retinal cell specific protein.

In terms of biological role, seems to be implicated in the pathway from retinal rod guanylate cyclase to rhodopsin. May be involved in the blocking of the phosphorylation of rhodopsin. This chain is Visinin, found in Gallus gallus (Chicken).